The primary structure comprises 450 residues: tRNA-2-methylthio-N(6)-dimethylallyladenosine synthase (450 aa).

One can recognise an MTTase N-terminal domain in the interval 3–119 (RRYYITTFGC…LGELLEQVWN (117 aa)). Cysteine 12, cysteine 48, cysteine 82, cysteine 154, cysteine 158, and cysteine 161 together coordinate [4Fe-4S] cluster. The Radical SAM core domain maps to 140–377 (RDSTVTAWVN…NHLVAKIAGD (238 aa)). A TRAM domain is found at 380–444 (QRYLGREEVV…AFSLSGVPLA (65 aa)).

This sequence belongs to the methylthiotransferase family. MiaB subfamily. As to quaternary structure, monomer. [4Fe-4S] cluster is required as a cofactor.

The protein resides in the cytoplasm. It catalyses the reaction N(6)-dimethylallyladenosine(37) in tRNA + (sulfur carrier)-SH + AH2 + 2 S-adenosyl-L-methionine = 2-methylsulfanyl-N(6)-dimethylallyladenosine(37) in tRNA + (sulfur carrier)-H + 5'-deoxyadenosine + L-methionine + A + S-adenosyl-L-homocysteine + 2 H(+). Catalyzes the methylthiolation of N6-(dimethylallyl)adenosine (i(6)A), leading to the formation of 2-methylthio-N6-(dimethylallyl)adenosine (ms(2)i(6)A) at position 37 in tRNAs that read codons beginning with uridine. This Thermosynechococcus vestitus (strain NIES-2133 / IAM M-273 / BP-1) protein is tRNA-2-methylthio-N(6)-dimethylallyladenosine synthase.